The following is a 168-amino-acid chain: 2-C-methyl-D-erythritol 2,4-cyclodiphosphate synthase (168 aa).

The a divalent metal cation site is built by Asp11 and His13. Residues Asp11–His13 and His41–Ser42 each bind 4-CDP-2-C-methyl-D-erythritol 2-phosphate. His49 is an a divalent metal cation binding site. 4-CDP-2-C-methyl-D-erythritol 2-phosphate-binding positions include Asp63–Gly65, Phe68–Asp72, Thr139–Glu142, Phe146, and Arg149.

The protein belongs to the IspF family. Homotrimer. A divalent metal cation is required as a cofactor.

The catalysed reaction is 4-CDP-2-C-methyl-D-erythritol 2-phosphate = 2-C-methyl-D-erythritol 2,4-cyclic diphosphate + CMP. It participates in isoprenoid biosynthesis; isopentenyl diphosphate biosynthesis via DXP pathway; isopentenyl diphosphate from 1-deoxy-D-xylulose 5-phosphate: step 4/6. Involved in the biosynthesis of isopentenyl diphosphate (IPP) and dimethylallyl diphosphate (DMAPP), two major building blocks of isoprenoid compounds. Catalyzes the conversion of 4-diphosphocytidyl-2-C-methyl-D-erythritol 2-phosphate (CDP-ME2P) to 2-C-methyl-D-erythritol 2,4-cyclodiphosphate (ME-CPP) with a corresponding release of cytidine 5-monophosphate (CMP). The sequence is that of 2-C-methyl-D-erythritol 2,4-cyclodiphosphate synthase from Psychrobacter cryohalolentis (strain ATCC BAA-1226 / DSM 17306 / VKM B-2378 / K5).